Here is a 110-residue protein sequence, read N- to C-terminus: MGQNDLVKTLRMNYLFDFYQSLLTNKQRNYLELFYLEDYSLSEIADTFNVSRQAVYDNIRRTGDLVEDYEKKLELYQKFEQRREIYDEMKQHLSNPEQIQRYIQQLEDLE.

The protein belongs to the UPF0122 family.

Its function is as follows. Might take part in the signal recognition particle (SRP) pathway. This is inferred from the conservation of its genetic proximity to ftsY/ffh. May be a regulatory protein. The sequence is that of UPF0122 protein SaurJH9_1295 from Staphylococcus aureus (strain JH9).